Consider the following 222-residue polypeptide: 7-carboxy-7-deazaguanine synthase (222 aa).

Substrate is bound by residues 16-18 (LQG) and R31. One can recognise a Radical SAM core domain in the interval 22 to 222 (NLGRPAVFVR…IMAWGNARGK (201 aa)). Residues C35, C39, and C42 each contribute to the [4Fe-4S] cluster site. T44 lines the Mg(2+) pocket. Position 77 (T77) interacts with substrate. Residues G79 and 126-128 (SPK) each bind S-adenosyl-L-methionine.

The protein belongs to the radical SAM superfamily. 7-carboxy-7-deazaguanine synthase family. In terms of assembly, homodimer. The cofactor is [4Fe-4S] cluster. S-adenosyl-L-methionine is required as a cofactor. Requires Mg(2+) as cofactor.

The enzyme catalyses 6-carboxy-5,6,7,8-tetrahydropterin + H(+) = 7-carboxy-7-deazaguanine + NH4(+). The protein operates within purine metabolism; 7-cyano-7-deazaguanine biosynthesis. Catalyzes the complex heterocyclic radical-mediated conversion of 6-carboxy-5,6,7,8-tetrahydropterin (CPH4) to 7-carboxy-7-deazaguanine (CDG), a step common to the biosynthetic pathways of all 7-deazapurine-containing compounds. The protein is 7-carboxy-7-deazaguanine synthase of Pyrobaculum aerophilum (strain ATCC 51768 / DSM 7523 / JCM 9630 / CIP 104966 / NBRC 100827 / IM2).